The primary structure comprises 361 residues: Very-long-chain 3-oxoacyl-CoA reductase (361 aa).

A helical membrane pass occupies residues 32 to 52 (PALILSTVGAAFLLRYTLSIF). NADP(+) contacts are provided by Val79, Asp133, Asn163, Arg198, Tyr236, Lys240, Val269, and Ser271. The active-site Proton donor is the Tyr236. The active-site Lowers pKa of active site Tyr is the Lys240.

Belongs to the short-chain dehydrogenases/reductases (SDR) family.

The protein localises to the endoplasmic reticulum membrane. It catalyses the reaction a very-long-chain (3R)-3-hydroxyacyl-CoA + NADP(+) = a very-long-chain 3-oxoacyl-CoA + NADPH + H(+). It functions in the pathway lipid metabolism; fatty acid biosynthesis. Functionally, component of the microsomal membrane bound fatty acid elongation system, which produces the 26-carbon very long-chain fatty acids (VLCFA) from palmitate. Catalyzes the reduction of the 3-ketoacyl-CoA intermediate that is formed in each cycle of fatty acid elongation. VLCFAs serve as precursors for ceramide and sphingolipids. The chain is Very-long-chain 3-oxoacyl-CoA reductase from Cryptococcus neoformans var. neoformans serotype D (strain B-3501A) (Filobasidiella neoformans).